Here is a 497-residue protein sequence, read N- to C-terminus: RNA-splicing ligase RtcB homolog (497 aa).

5 residues coordinate Mn(2+): Asp-111, Cys-114, His-219, His-251, and His-345. 218–222 (NHYAE) is a binding site for GMP. Residues 345 to 346 (HN), 394 to 397 (GGTM), Ser-401, 420 to 423 (HGAG), and Lys-496 each bind GMP. The active-site GMP-histidine intermediate is His-420.

This sequence belongs to the RtcB family. As to quaternary structure, catalytic component of the tRNA-splicing ligase complex. Mn(2+) serves as cofactor.

The enzyme catalyses a 3'-end 3'-phospho-ribonucleotide-RNA + a 5'-end dephospho-ribonucleoside-RNA + GTP = a ribonucleotidyl-ribonucleotide-RNA + GMP + diphosphate. The catalysed reaction is a 3'-end 2',3'-cyclophospho-ribonucleotide-RNA + a 5'-end dephospho-ribonucleoside-RNA + GTP + H2O = a ribonucleotidyl-ribonucleotide-RNA + GMP + diphosphate + H(+). Functionally, catalytic subunit of the tRNA-splicing ligase complex that acts by directly joining spliced tRNA halves to mature-sized tRNAs by incorporating the precursor-derived splice junction phosphate into the mature tRNA as a canonical 3',5'-phosphodiester. May act as an RNA ligase with broad substrate specificity, and may function toward other RNAs. The sequence is that of RNA-splicing ligase RtcB homolog from Monosiga brevicollis (Choanoflagellate).